The primary structure comprises 399 residues: Phosphoglycerate kinase (399 aa).

Residues 22-24 (DLN), Arg-37, 60-63 (HFGR), Arg-119, and Arg-152 each bind substrate. ATP contacts are provided by residues Lys-202, Glu-324, and 354 to 357 (GGDT).

Belongs to the phosphoglycerate kinase family. In terms of assembly, monomer.

Its subcellular location is the cytoplasm. It carries out the reaction (2R)-3-phosphoglycerate + ATP = (2R)-3-phospho-glyceroyl phosphate + ADP. Its pathway is carbohydrate degradation; glycolysis; pyruvate from D-glyceraldehyde 3-phosphate: step 2/5. The chain is Phosphoglycerate kinase from Sinorhizobium fredii (strain NBRC 101917 / NGR234).